Here is a 198-residue protein sequence, read N- to C-terminus: Recombination protein RecR (198 aa).

The C4-type zinc-finger motif lies at 58 to 73; that stretch reads CSVCGNFTDKDPCAIC. Residues 81-175 enclose the Toprim domain; it reads NTICVVEHPK…KVTRIAHGIP (95 aa).

This sequence belongs to the RecR family.

Functionally, may play a role in DNA repair. It seems to be involved in an RecBC-independent recombinational process of DNA repair. It may act with RecF and RecO. In Clostridium tetani (strain Massachusetts / E88), this protein is Recombination protein RecR.